The chain runs to 288 residues: Putative alkaline ceramidase dcd3A (288 aa).

N23 carries an N-linked (GlcNAc...) asparagine glycan. A run of 7 helical transmembrane segments spans residues 41–61, 78–98, 105–125, 146–166, 172–192, 206–226, and 240–260; these read IISLFGIYGIWIMMPNFGTGV, VILSYISLIVVGVGSAFYHAT, LFDELPMIYTALIMLYIMVTV, HLLPYLLIAYGLFVTITILVI, ILQVSFGALVFYVVFHSIYLI, SYLYKYAFVSMLVGFTCWVVE, and LHAFWHFFTGMSTYVWTQFLI.

The protein belongs to the alkaline ceramidase family.

It localises to the membrane. The polypeptide is Putative alkaline ceramidase dcd3A (dcd3A) (Dictyostelium discoideum (Social amoeba)).